The following is a 634-amino-acid chain: UPF0313 protein PG_0934 (634 aa).

The Radical SAM core domain occupies 302–582 (AYEMIKHSVN…RQHMFFFWYK (281 aa)). Residues Cys-316, Cys-320, and Cys-323 each coordinate [4Fe-4S] cluster. A disordered region spans residues 607-634 (DRTTSSRNDRHTPPSTQPRKSKSKSRHS). Residues 625–634 (RKSKSKSRHS) are compositionally biased toward basic residues.

Belongs to the UPF0313 family. The cofactor is [4Fe-4S] cluster.

The protein is UPF0313 protein PG_0934 of Porphyromonas gingivalis (strain ATCC BAA-308 / W83).